The primary structure comprises 636 residues: 3-phosphoinositide-dependent protein kinase 1 (636 aa).

2 stretches are compositionally biased toward low complexity: residues 1–20 (MEDL…NNDT) and 27–37 (APTTLNLTPTA). Positions 1–45 (MEDLTPTNTSLDTTTTNNDTTSDREAAPTTLNLTPTASESENSLS) are disordered. Residues 69–364 (FMFLQSMGEG…SQELMAHKFF (296 aa)) enclose the Protein kinase domain. ATP contacts are provided by residues 79–81 (AYS) and lysine 98. The PIF-pocket stretch occupies residues 100–149 (LQKSYLNRHQKMDAIIREKNILTYLSQECGGHPFVTQLYTHFHDQARIYF). ATP contacts are provided by residues 152-154 (GLV) and aspartate 158. The active-site Proton acceptor is aspartate 197. Positions 201 and 215 each coordinate ATP. 2 disordered regions span residues 233–264 (TDAN…EENT) and 593–636 (KKSR…KKSP). Residues 550-631 (DLEKKADEWC…QVSKKLSMQM (82 aa)) are a coiled coil. Over residues 597–624 (KEMMREQKALRRKQEKEEKKALKAEQVS) the composition is skewed to basic and acidic residues.

It belongs to the protein kinase superfamily. AGC Ser/Thr protein kinase family. PDPK1 subfamily. As to quaternary structure, interacts directly with sgk-1, akt-1 and akt-2.

It is found in the cytoplasm. It carries out the reaction L-seryl-[protein] + ATP = O-phospho-L-seryl-[protein] + ADP + H(+). It catalyses the reaction L-threonyl-[protein] + ATP = O-phospho-L-threonyl-[protein] + ADP + H(+). In terms of biological role, involved in the daf-2/insulin receptor-like transduction pathway, which controls longevity and prevents developmental arrest at the dauer stage. Phosphorylates and activates sgk-1, akt-1 and akt-2. In Caenorhabditis elegans, this protein is 3-phosphoinositide-dependent protein kinase 1.